The sequence spans 270 residues: 3-phenylpropionate-dihydrodiol/cinnamic acid-dihydrodiol dehydrogenase (270 aa).

10-34 (FITGGGSGLGLALVERFIEEGAQVA) lines the NAD(+) pocket. Residue S143 coordinates substrate. Y156 functions as the Proton acceptor in the catalytic mechanism.

Belongs to the short-chain dehydrogenases/reductases (SDR) family.

The catalysed reaction is 3-(cis-5,6-dihydroxycyclohexa-1,3-dien-1-yl)propanoate + NAD(+) = 3-(2,3-dihydroxyphenyl)propanoate + NADH + H(+). The enzyme catalyses (2E)-3-(cis-5,6-dihydroxycyclohexa-1,3-dien-1-yl)prop-2-enoate + NAD(+) = (2E)-3-(2,3-dihydroxyphenyl)prop-2-enoate + NADH + H(+). It participates in aromatic compound metabolism; 3-phenylpropanoate degradation. Functionally, converts 3-phenylpropionate-dihydrodiol (PP-dihydrodiol) and cinnamic acid-dihydrodiol (CI-dihydrodiol) into 3-(2,3-dihydroxylphenyl)propanoic acid (DHPP) and 2,3-dihydroxicinnamic acid (DHCI), respectively. The protein is 3-phenylpropionate-dihydrodiol/cinnamic acid-dihydrodiol dehydrogenase of Escherichia coli O8 (strain IAI1).